We begin with the raw amino-acid sequence, 329 residues long: uncharacterized protein (329 aa).

Positions Ile38–Phe184 constitute an SIS domain. Gly56–Ala61 contacts ATP. CBS domains are found at residues Gln211–Leu267 and Thr276–Ala329.

This sequence belongs to the SIS family. GutQ/KpsF subfamily.

This is an uncharacterized protein from Helicobacter pylori (strain J99 / ATCC 700824) (Campylobacter pylori J99).